Reading from the N-terminus, the 461-residue chain is UDP-glucosyltransferase 1 (461 aa).

This sequence belongs to the UDP-glycosyltransferase family.

It participates in secondary metabolite biosynthesis. Functionally, UDP-glucosyltransferase; part of the pathway that mediates the biosynthesis of tenellin-type 2-pyridones, iron-chelating compounds involved in iron stress tolerance, competition with the natural competitor fungus Metarhizium robertsii and insect hosts infection. Targets the N-OH hydroxyl residue of 15-hydroxytellenin (15-HT) to produce pyridovericin-N-O-(beta-D-glucopyranoside) which is further methylated by the methyltransferase MT1 to yield pyridovericin-N-O-(4-O-methyl-beta-D-glucopyranoside) (PMGP). The pathway begins with the assembly of the polyketide-amino acid backbone by the hybrid PKS-NRPS tenS with the help of the enoyl reductase tenC. These enzymes catalyze the synthesis of the pyrrolidine-2-dione intermediates pretellinin A, 11-hydropretellenin A, 12-hydropretellenin A, 13-hydropretellenin A, 14-hydropretellenin A, 12-oxopretellenin A and prototellinin D. The cytochrome P450 monooxygenase tenA then catalyzes an oxidative ring expansion of pretenellin A and 14-hydropretellenin A to form the 2-pyridone core, leading to pretenellin B and pyridovericin, respectively. The cytochrome P450 monooxygenase tenB is then required for the selective N-hydroxylation of the 2-pyridone nitrogen of yield tellinin and 15-hydroxytellenin (15-HT), respectively. The UDP-glucosyltransferase GT1 and the methyltransferase MT1, located outside the tenS gene cluster, contribute to the stepwise glycosylation and methylation of 15-HT to obtain the glycoside pyridovericin-N-O-(4-O-methyl-beta-D-glucopyranoside) (PMGP). Additional related compounds such as 1-O-methyl-15-HT, (8Z)-1-O-methyl-15-HT, and O-methyltenellin A are also produced but the enzymes involved in their biosynthesis have still to be determined. The polypeptide is UDP-glucosyltransferase 1 (Beauveria bassiana (strain ARSEF 2860) (White muscardine disease fungus)).